Reading from the N-terminus, the 393-residue chain is MAAVGSGGSTATAGPGAVSAGALEPGTSSAAHRRLKYISLAVLVVQNASLILSIRYARTLPGDRFFATTAVVMAEVLKGLTCLLLLFAQKRGNVKHLVLFLHEAVLVQYMDTLKLAVPSLIYTLQNNLQYIAISNLPAATFQVTYQLKILTTALFSVLMLNRSLSRLQWASLLLLFTGVAIVQAQQAGGGGPRPLDQNPGVGLAAVVASCLSSGFAGVYFEKILKGSSGSVWLRNLQLGLFGTALGLVGLWWAEGTAVTHRGFFFGYTPAVWGVVLNQAFGGLLVAVVVKYADNILKGFATSLSIVLSTVASIRLFGFHVDPLFALGAGLVIGAVYLYSLPRGAAKAIASASAPTSGPCTHQQPPGQPPPPQLSSHHGDLSTEPFLPKSVLVK.

Helical transmembrane passes span 3–23 (AVGS…AGAL), 37–57 (YISL…IRYA), 65–85 (FFAT…CLLL), 97–117 (LVLF…KLAV), 140–160 (TFQV…VLML), 169–189 (WASL…QAGG), 200–220 (GVGL…GVYF), 238–258 (LGLF…GTAV), 269–289 (PAVW…AVVV), and 315–335 (LFGF…IGAV). Residues 353-393 (APTSGPCTHQQPPGQPPPPQLSSHHGDLSTEPFLPKSVLVK) form a disordered region.

It belongs to the nucleotide-sugar transporter family. SLC35A subfamily. As to quaternary structure, interacts with SLC35A3; the interaction is reduced in the presence of SLC35A4. Found in a complex with SLC35A3 and SLC35A4.

It localises to the golgi apparatus membrane. The catalysed reaction is UMP(out) + UDP-alpha-D-galactose(in) = UMP(in) + UDP-alpha-D-galactose(out). It catalyses the reaction UDP-N-acetyl-alpha-D-galactosamine(in) + UMP(out) = UDP-N-acetyl-alpha-D-galactosamine(out) + UMP(in). It carries out the reaction UMP(out) + UDP-alpha-D-glucose(in) = UMP(in) + UDP-alpha-D-glucose(out). The enzyme catalyses UMP(out) + UDP-N-acetyl-alpha-D-glucosamine(in) = UMP(in) + UDP-N-acetyl-alpha-D-glucosamine(out). The catalysed reaction is UDP-alpha-D-galactose(in) + AMP(out) = UDP-alpha-D-galactose(out) + AMP(in). It catalyses the reaction UDP-alpha-D-galactose(in) + CMP(out) = UDP-alpha-D-galactose(out) + CMP(in). It carries out the reaction UDP-N-acetyl-alpha-D-galactosamine(out) + UDP-alpha-D-galactose(in) = UDP-N-acetyl-alpha-D-galactosamine(in) + UDP-alpha-D-galactose(out). The enzyme catalyses UDP-N-acetyl-alpha-D-glucosamine(out) + UDP-alpha-D-galactose(in) = UDP-N-acetyl-alpha-D-glucosamine(in) + UDP-alpha-D-galactose(out). The catalysed reaction is UDP-alpha-D-galactose(in) + UDP-alpha-D-glucose(out) = UDP-alpha-D-galactose(out) + UDP-alpha-D-glucose(in). It catalyses the reaction UMP(out) + CMP(in) = UMP(in) + CMP(out). It carries out the reaction UMP(out) + AMP(in) = UMP(in) + AMP(out). Transports uridine diphosphate galactose (UDP-galactose) from the cytosol into the Golgi apparatus, functioning as an antiporter that exchanges UDP-galactose for UMP. It is also able to exchange UDP-galactose for AMP and CMP, and to transport UDP-N-acetylgalactosamine (UDP-GalNAc) and other nucleotide sugars. As a provider of UDP-galactose to galactosyltransferases present in the Golgi apparatus, it is necessary for globotriaosylceramide/globoside (Gb3Cer) synthesis from lactosylceramide. In Bos taurus (Bovine), this protein is UDP-galactose translocator.